Consider the following 504-residue polypeptide: ATP synthase subunit alpha (504 aa).

171 to 178 (GDRQTGKT) is an ATP binding site.

The protein belongs to the ATPase alpha/beta chains family. F-type ATPases have 2 components, CF(1) - the catalytic core - and CF(0) - the membrane proton channel. CF(1) has five subunits: alpha(3), beta(3), gamma(1), delta(1), epsilon(1). CF(0) has three main subunits: a(1), b(2) and c(9-12). The alpha and beta chains form an alternating ring which encloses part of the gamma chain. CF(1) is attached to CF(0) by a central stalk formed by the gamma and epsilon chains, while a peripheral stalk is formed by the delta and b chains.

The protein localises to the cell inner membrane. It carries out the reaction ATP + H2O + 4 H(+)(in) = ADP + phosphate + 5 H(+)(out). Its function is as follows. Produces ATP from ADP in the presence of a proton gradient across the membrane. The alpha chain is a regulatory subunit. The protein is ATP synthase subunit alpha of Helicobacter hepaticus (strain ATCC 51449 / 3B1).